We begin with the raw amino-acid sequence, 150 residues long: Large ribosomal subunit protein uL15 (150 aa).

Residues 1-57 (MTLRLESLKPNKGARRRKLRKGRGIAAGQGASCGFGMRGQKSRSGRPTRPGFEGGQM) are disordered. Positions 12–23 (KGARRRKLRKGR) are enriched in basic residues. Positions 25–37 (IAAGQGASCGFGM) are enriched in gly residues.

Belongs to the universal ribosomal protein uL15 family. As to quaternary structure, part of the 50S ribosomal subunit.

Binds to the 23S rRNA. The chain is Large ribosomal subunit protein uL15 from Synechococcus sp. (strain CC9311).